The chain runs to 223 residues: Protein Mis18-alpha (223 aa).

Residues 1 to 30 form a disordered region; that stretch reads MAGTFSLEPCSTSSSCNHQGKRSESSLLEK. Over residues 9-18 the composition is skewed to polar residues; it reads PCSTSSSCNH. Over residues 21–30 the composition is skewed to basic and acidic residues; the sequence is KRSESSLLEK. 3 positions are modified to phosphoserine: Ser-33, Ser-36, and Ser-37. The region spanning 71–169 is the Mis18 domain; the sequence is PLVFLCTRCR…SVEAVESYTL (99 aa). The Zn(2+) site is built by Cys-76, Cys-79, Cys-132, and Cys-135. Residue Lys-153 forms a Glycyl lysine isopeptide (Lys-Gly) (interchain with G-Cter in SUMO2) linkage. Ser-223 is modified (phosphoserine).

This sequence belongs to the mis18 family. As to quaternary structure, homodimer, and heterodimer with OIP5/MIS18B. Identified in a complex containing MIS18A, OIP5/MIS18B, MIS18BP1, RBBP7 and RBBP4.

Its subcellular location is the nucleus. It is found in the chromosome. The protein localises to the centromere. Functionally, required for recruitment of CENPA to centromeres and normal chromosome segregation during mitosis. The sequence is that of Protein Mis18-alpha (Mis18a) from Rattus norvegicus (Rat).